The primary structure comprises 247 residues: Phycobilisome rod-core linker polypeptide CpcG2 (247 aa).

The PBS-linker domain maps to 11–189 (SSQNQRVPGY…YWRDKLENER (179 aa)).

It belongs to the phycobilisome linker protein family. As to quaternary structure, the phycobilisome is a hemidiscoidal structure that is composed of two distinct substructures: a core complex and a number of rods radiating from the core.

Its subcellular location is the cellular thylakoid membrane. Rod-core linker protein required for attachment of phycocyanin to allophycocyanin in cores of phycobilisomes. In terms of biological role, linker polypeptides determine the state of aggregation and the location of the disk-shaped phycobiliprotein units within the phycobilisome and modulate their spectroscopic properties in order to mediate a directed and optimal energy transfer. The sequence is that of Phycobilisome rod-core linker polypeptide CpcG2 (cpcG2) from Mastigocladus laminosus (Fischerella sp.).